A 308-amino-acid polypeptide reads, in one-letter code: Glutathione synthetase (308 aa).

In terms of domain architecture, ATP-grasp spans 117–300 (KLLPLSFPKF…LERDCWDYFE (184 aa)). 143 to 198 (YAEYGDIVLKPLYDYGGNGVCRICGRADVGAISSAMVERYEAPLVAQQFIDDISSD) contacts ATP. Mg(2+)-binding residues include Glu-271 and Asn-273.

The protein belongs to the prokaryotic GSH synthase family. The cofactor is Mg(2+). It depends on Mn(2+) as a cofactor.

It catalyses the reaction gamma-L-glutamyl-L-cysteine + glycine + ATP = glutathione + ADP + phosphate + H(+). The protein operates within sulfur metabolism; glutathione biosynthesis; glutathione from L-cysteine and L-glutamate: step 2/2. This is Glutathione synthetase from Anaplasma centrale.